We begin with the raw amino-acid sequence, 139 residues long: uncharacterized protein (139 aa).

This is an uncharacterized protein from Ostreid herpesvirus 1 (isolate France) (OsHV-1).